The following is a 1339-amino-acid chain: DNA polymerase alpha catalytic subunit (1339 aa).

Disordered regions lie at residues 1-90 and 177-203; these read MSGG…SMSD and NVER…GYRN. The span at 27-36 shows a compositional bias: basic and acidic residues; it reads DQWRSLREEV. Over residues 79 to 89 the composition is skewed to polar residues; the sequence is PKQQTLAQSMS. 8 residues coordinate Zn(2+): Cys1179, Cys1182, Cys1213, Cys1216, Cys1233, Cys1243, Cys1271, and Cys1286. A CysA-type zinc finger spans residues 1179–1216; sequence CTHCRLMTPINPHTRVMEVLADQERQRDRFDLYVCVSC. The short motif at 1243–1271 is the CysB motif element; the sequence is CGSAAAVKAVRTQFTYYRALFDVPHAPGC.

Belongs to the DNA polymerase type-B family.

It is found in the nucleus. The enzyme catalyses DNA(n) + a 2'-deoxyribonucleoside 5'-triphosphate = DNA(n+1) + diphosphate. Its function is as follows. Polymerase alpha in a complex with DNA primase is a replicative polymerase. This chain is DNA polymerase alpha catalytic subunit, found in Leishmania donovani.